Reading from the N-terminus, the 192-residue chain is UPF0312 protein PputGB1_5030 (192 aa).

An N-terminal signal peptide occupies residues 1–23; that stretch reads MLKKTFAALALGTALLSAGQAMA.

The protein belongs to the UPF0312 family. Type 1 subfamily.

The protein resides in the periplasm. The protein is UPF0312 protein PputGB1_5030 of Pseudomonas putida (strain GB-1).